The primary structure comprises 492 residues: DEAD-box ATP-dependent RNA helicase RhpA (492 aa).

The short motif at 20–48 (PSFNDLGLKESVLKSVYEAGFTSPSPIQE) is the Q motif element. A Helicase ATP-binding domain is found at 51 to 220 (IPAVLQGRDV…DKILENPIKI (170 aa)). 64-71 (AQTGTGKT) is an ATP binding site. Positions 168 to 171 (DESD) match the DEAD box motif. Positions 231–393 (DITQRFYVIN…EIPTINENQI (163 aa)) constitute a Helicase C-terminal domain. Residues 445 to 492 (AIQNPKEKTPKPSHKKTPQHERARSFKKGQHRDRHPKTNHHSKKPKRR) form a disordered region. A compositionally biased stretch (basic residues) spans 469-492 (SFKKGQHRDRHPKTNHHSKKPKRR).

This sequence belongs to the DEAD box helicase family. In terms of assembly, homodimer. Interacts with RNase J (rnj), might be a member of a minimal RNA degradosome complex.

The protein resides in the cytoplasm. It carries out the reaction ATP + H2O = ADP + phosphate + H(+). In terms of biological role, DEAD-box RNA helicase probably involved in RNA degradation. Unwinds dsRNA in both 5'- and 3'-directions. Background RNA-dependent ATPase activity is stimulated about 5-fold by RNaseJ (rnj). Stimulates the dsRNase activity of RNase J. The sequence is that of DEAD-box ATP-dependent RNA helicase RhpA (rhpA) from Helicobacter pylori (strain B128).